The chain runs to 448 residues: Zinc finger and BTB domain-containing protein 14 (448 aa).

The region spanning Cys-36–Lys-102 is the BTB domain. The Nuclear localization signal motif lies at His-50–Lys-66. Residues Val-130–Thr-193 are disordered. Over residues Asp-156–Asp-167 the composition is skewed to acidic residues. C2H2-type zinc fingers lie at residues Ile-275–Pro-302, Phe-303–Pro-330, Tyr-331–Pro-358, Phe-359–Pro-386, and Phe-387–Gln-415. Residues Arg-404 to Gln-415 are compositionally biased toward basic and acidic residues. The segment at Arg-404–Glu-425 is disordered. Polar residues predominate over residues Val-416–Glu-425.

The protein belongs to the krueppel C2H2-type zinc-finger protein family. Interacts with ZBTB21.

The protein localises to the nucleus. Functionally, transcriptional activator of the dopamine transporter (DAT), binding it's promoter at the consensus sequence 5'-CCTGCACAGTTCACGGA-3'. Binds to 5'-d(GCC)(n)-3' trinucleotide repeats in promoter regions and acts as a repressor of the FMR1 gene. Transcriptional repressor of MYC and thymidine kinase promoters. The polypeptide is Zinc finger and BTB domain-containing protein 14 (ZBTB14) (Gallus gallus (Chicken)).